We begin with the raw amino-acid sequence, 883 residues long: Alanine--tRNA ligase (883 aa).

His560, His564, Cys665, and His669 together coordinate Zn(2+).

Belongs to the class-II aminoacyl-tRNA synthetase family. Requires Zn(2+) as cofactor.

It is found in the cytoplasm. The catalysed reaction is tRNA(Ala) + L-alanine + ATP = L-alanyl-tRNA(Ala) + AMP + diphosphate. In terms of biological role, catalyzes the attachment of alanine to tRNA(Ala) in a two-step reaction: alanine is first activated by ATP to form Ala-AMP and then transferred to the acceptor end of tRNA(Ala). Also edits incorrectly charged Ser-tRNA(Ala) and Gly-tRNA(Ala) via its editing domain. The polypeptide is Alanine--tRNA ligase (Mesomycoplasma hyopneumoniae (strain 7448) (Mycoplasma hyopneumoniae)).